The following is a 476-amino-acid chain: Bifunctional protein HldE (476 aa).

Positions 1–318 are ribokinase; sequence MAQYSAEFKQ…ENAIHARPET (318 aa). 195-198 lines the ATP pocket; it reads NMSE. Aspartate 264 is an active-site residue. Residues 344–476 form a cytidylyltransferase region; it reads MTNGCFDILH…VIEKIKLLKD (133 aa).

It in the N-terminal section; belongs to the carbohydrate kinase PfkB family. In the C-terminal section; belongs to the cytidylyltransferase family. Homodimer.

It carries out the reaction D-glycero-beta-D-manno-heptose 7-phosphate + ATP = D-glycero-beta-D-manno-heptose 1,7-bisphosphate + ADP + H(+). It catalyses the reaction D-glycero-beta-D-manno-heptose 1-phosphate + ATP + H(+) = ADP-D-glycero-beta-D-manno-heptose + diphosphate. The protein operates within nucleotide-sugar biosynthesis; ADP-L-glycero-beta-D-manno-heptose biosynthesis; ADP-L-glycero-beta-D-manno-heptose from D-glycero-beta-D-manno-heptose 7-phosphate: step 1/4. It participates in nucleotide-sugar biosynthesis; ADP-L-glycero-beta-D-manno-heptose biosynthesis; ADP-L-glycero-beta-D-manno-heptose from D-glycero-beta-D-manno-heptose 7-phosphate: step 3/4. Its pathway is bacterial outer membrane biogenesis; LOS core biosynthesis. Functionally, catalyzes the phosphorylation of D-glycero-D-manno-heptose 7-phosphate at the C-1 position to selectively form D-glycero-beta-D-manno-heptose-1,7-bisphosphate. In terms of biological role, catalyzes the ADP transfer from ATP to D-glycero-beta-D-manno-heptose 1-phosphate, yielding ADP-D-glycero-beta-D-manno-heptose. The chain is Bifunctional protein HldE from Haemophilus influenzae (strain ATCC 51907 / DSM 11121 / KW20 / Rd).